Here is a 549-residue protein sequence, read N- to C-terminus: Peptide transport periplasmic protein SapA (549 aa).

Positions 1 to 21 (MRLVLSSLIVIAGLLSSQATA) are cleaved as a signal peptide.

This sequence belongs to the bacterial solute-binding protein 5 family.

It is found in the periplasm. Involved in a peptide intake transport system that plays a role in the resistance to antimicrobial peptides. This is Peptide transport periplasmic protein SapA from Salmonella typhimurium (strain LT2 / SGSC1412 / ATCC 700720).